A 1407-amino-acid chain; its full sequence is DNA-directed RNA polymerase subunit beta' (1407 aa).

Residues cysteine 70, cysteine 72, cysteine 85, and cysteine 88 each contribute to the Zn(2+) site. Mg(2+) contacts are provided by aspartate 460, aspartate 462, and aspartate 464. Zn(2+) is bound by residues cysteine 814, cysteine 888, cysteine 895, and cysteine 898. Lysine 972 is modified (N6-acetyllysine).

This sequence belongs to the RNA polymerase beta' chain family. The RNAP catalytic core consists of 2 alpha, 1 beta, 1 beta' and 1 omega subunit. When a sigma factor is associated with the core the holoenzyme is formed, which can initiate transcription. It depends on Mg(2+) as a cofactor. Zn(2+) is required as a cofactor.

The enzyme catalyses RNA(n) + a ribonucleoside 5'-triphosphate = RNA(n+1) + diphosphate. DNA-dependent RNA polymerase catalyzes the transcription of DNA into RNA using the four ribonucleoside triphosphates as substrates. This Shigella flexneri serotype 5b (strain 8401) protein is DNA-directed RNA polymerase subunit beta'.